The chain runs to 375 residues: Kininogen (375 aa).

A signal peptide spans 1-23 (MKLGVRLCVLVVFSLQLWGPGQG). Cystatin kininogen-type domains follow at residues 35–139 (CDDK…VEAP) and 156–260 (VESE…GPLD). Asn-74 carries N-linked (GlcNAc) asparagine glycosylation. Intrachain disulfides connect Cys-91/Cys-102, Cys-115/Cys-133, Cys-211/Cys-223, and Cys-234/Cys-254. N-linked (GlcNAc) asparagine glycosylation occurs at Asn-235. The tract at residues 283–375 (EVKTTQASTA…LSDLDLLGKK (93 aa)) is disordered.

Post-translationally, N-glycosylated, with sialylated biantennary complex-type glycans. In terms of processing, O-glycosylated, sialylated oligosaccharides. Bradykinin is released from kininogen by kallikrein. Post-translationally, the N-terminus is blocked. As to expression, expressed in the skin, liver, intestine, spleen, pancreas and kidney.

It is found in the cytoplasm. The protein resides in the vacuole. Its function is as follows. Inhibits papain and ficin (cysteine proteinases) but not trypsin (a serine proteinase). This Salmo salar (Atlantic salmon) protein is Kininogen (LOC106584303).